A 361-amino-acid chain; its full sequence is Cobalt-precorrin-5B C(1)-methyltransferase (361 aa).

Belongs to the CbiD family.

The enzyme catalyses Co-precorrin-5B + S-adenosyl-L-methionine = Co-precorrin-6A + S-adenosyl-L-homocysteine. It participates in cofactor biosynthesis; adenosylcobalamin biosynthesis; cob(II)yrinate a,c-diamide from sirohydrochlorin (anaerobic route): step 6/10. Functionally, catalyzes the methylation of C-1 in cobalt-precorrin-5B to form cobalt-precorrin-6A. The chain is Cobalt-precorrin-5B C(1)-methyltransferase from Methylorubrum extorquens (strain CM4 / NCIMB 13688) (Methylobacterium extorquens).